The following is a 97-amino-acid chain: Aspartyl/glutamyl-tRNA(Asn/Gln) amidotransferase subunit C (97 aa).

The protein belongs to the GatC family. As to quaternary structure, heterotrimer of A, B and C subunits.

The enzyme catalyses L-glutamyl-tRNA(Gln) + L-glutamine + ATP + H2O = L-glutaminyl-tRNA(Gln) + L-glutamate + ADP + phosphate + H(+). The catalysed reaction is L-aspartyl-tRNA(Asn) + L-glutamine + ATP + H2O = L-asparaginyl-tRNA(Asn) + L-glutamate + ADP + phosphate + 2 H(+). Allows the formation of correctly charged Asn-tRNA(Asn) or Gln-tRNA(Gln) through the transamidation of misacylated Asp-tRNA(Asn) or Glu-tRNA(Gln) in organisms which lack either or both of asparaginyl-tRNA or glutaminyl-tRNA synthetases. The reaction takes place in the presence of glutamine and ATP through an activated phospho-Asp-tRNA(Asn) or phospho-Glu-tRNA(Gln). The polypeptide is Aspartyl/glutamyl-tRNA(Asn/Gln) amidotransferase subunit C (Prochlorococcus marinus (strain AS9601)).